The chain runs to 285 residues: MIYPDEAMLYAPVEWHDCSEGFEDIRYEKSTDGIAKITINRPQVRNAFRPLTVKEMIQALADARYDDNIGVIILTGAGDKAFCSGGDQKVRGDYGGYKDDSGVHHLNVLDFQRQIRTCPKPVVAMVAGYSIGGGHVLHMMCDLTIAADNAIFGQTGPKVGSFDGGWGASYMARIVGQKKAREIWFLCRQYDAKQALDMGLVNTVVPLADLEKETVRWCREMLQNSPMALRCLKAALNADCDGQAGLQELAGNATMLFYMTEEGQEGRNAFNQKRQPDFSKFKRNP.

Substrate-binding positions include arginine 45, 84 to 89, tyrosine 97, 129 to 133, threonine 155, serine 161, tyrosine 258, and lysine 273; these read SGGDQK and YSIGG. Hydrogencarbonate is bound at residue 154–156; sequence QTG.

The protein belongs to the enoyl-CoA hydratase/isomerase family. MenB subfamily. As to quaternary structure, homohexamer. Dimer of a homotrimer. The cofactor is hydrogencarbonate.

It carries out the reaction 2-succinylbenzoyl-CoA + H(+) = 1,4-dihydroxy-2-naphthoyl-CoA + H2O. The protein operates within quinol/quinone metabolism; 1,4-dihydroxy-2-naphthoate biosynthesis; 1,4-dihydroxy-2-naphthoate from chorismate: step 6/7. Its pathway is quinol/quinone metabolism; menaquinone biosynthesis. Its activity is regulated as follows. Inhibited by sulfite and nitrate. Functionally, converts o-succinylbenzoyl-CoA (OSB-CoA) to 1,4-dihydroxy-2-naphthoyl-CoA (DHNA-CoA). In Escherichia coli (strain K12), this protein is 1,4-dihydroxy-2-naphthoyl-CoA synthase.